Reading from the N-terminus, the 137-residue chain is Flagellar basal body rod protein FlgB (137 aa).

It belongs to the flagella basal body rod proteins family. In terms of assembly, the basal body constitutes a major portion of the flagellar organelle and consists of a number of rings mounted on a central rod. In Gram-negative bacteria, at least four rings, L, P, S and M are present, whereas Gram-positive bacteria lack the L and P rings. The rod consists of about 26 subunits of FlgG in the distal portion, and FlgB, FlgC and FlgF build up the proximal portion of the rod with about 6 subunits each. Rod assembly occurs by export via the flagellum-specific pathway of its constituent proteins and by their incorporation into the rod structure in the probable order of FlgB, FlgC, FlgF and FlgG. Another protein, FliE, also assembles onto the stable rod structure.

The protein resides in the bacterial flagellum basal body. Functionally, structural component of flagellum, the bacterial motility apparatus. Part of the rod structure of flagellar basal body. This chain is Flagellar basal body rod protein FlgB, found in Yersinia ruckeri.